Consider the following 228-residue polypeptide: 30 kDa heat shock protein (228 aa).

Disordered stretches follow at residues 34 to 53 (EVQG…PTRT), 117 to 136 (KGEP…DVDE), and 144 to 174 (TATG…APAE). The 180-residue stretch at 49–228 (QPTRTFSPKF…KHETIRIAIN (180 aa)) folds into the sHSP domain. Positions 144–158 (TATGANNQNNQQVAQ) are enriched in low complexity.

It belongs to the small heat shock protein (HSP20) family.

It localises to the cytoplasm. The protein is 30 kDa heat shock protein (hsp30) of Neurospora crassa (strain ATCC 24698 / 74-OR23-1A / CBS 708.71 / DSM 1257 / FGSC 987).